A 175-amino-acid polypeptide reads, in one-letter code: MEKLTDLNYTLSVITLMNSTLHTILEDPGMAYFPYIVSVLTVLFTLHKASIPTMKIALKTSKCSYKVVKYCIVTIFNTLLKLAGYKEQITTKDEIEKQMDRVVKEMRRQLEMIDKLTTREIEQVELLKRIHDKLMIRTVDEIDMTKEINQKNVRTLEEWENGRNPYEPKEVTAAM.

The Lumenal portion of the chain corresponds to 1–28; the sequence is MEKLTDLNYTLSVITLMNSTLHTILEDP. 2 N-linked (GlcNAc...) asparagine; by host glycosylation sites follow: N8 and N18. Residues 29–51 form a helical; Signal-anchor for type III membrane protein membrane-spanning segment; that stretch reads GMAYFPYIVSVLTVLFTLHKASI. Topologically, residues 52–175 are cytoplasmic; the sequence is PTMKIALKTS…YEPKEVTAAM (124 aa). Ca(2+)-binding residues include E120 and Q123.

It belongs to the rotavirus NSP4 family. Homotetramer. Interacts with the immature particle in the viroplasm. Interacts with host CAV1, early and late in infection. Interacts with host integrin ITGA1/ITGB1 heterodimer. Interacts with host integrin ITGA2/ITGB1 heterodimer. Interaction with microtubules blocks trafficking to the Golgi apparatus. Post-translationally, mannosylated. In terms of processing, the N-glycosyl content is primarily Man(9)GlcNAc, with a small amount of Man(8)GlcNAc.

It is found in the host rough endoplasmic reticulum membrane. Its subcellular location is the host membrane. The protein resides in the host caveola. It localises to the secreted. Its function is as follows. Plays an essential role in the virus replication cycle by acting as a viroporin. Creates a pore in the host endoplasmic reticulum and as a consequence releases Ca(2+) in the cytoplasm of infected cell. In turn, high levels of cytoplasmic calcium trigger membrane trafficking and transport of viral ER-associated proteins to viroplasms, sites of viral genome replication and immature particle assembly. The secreted form acts as an enterotoxin that causes phospholipase C-dependent elevation of the intracellular calcium concentration in host intestinal mucosa cells. Increased concentration of intracellular calcium disrupts the cytoskeleton and the tight junctions, raising the paracellular permeability. Potentiates chloride ion secretion through a calcium ion-dependent signaling pathway, inducing age-dependent diarrhea. To perform this enterotoxigenic role in vivo, NSP4 is released from infected enterocytes in a soluble form capable of diffusing within the intestinal lumen and interacting with host plasma membrane receptors on neighboring epithelial cells such as integrins ITGA1/ITGB1 and ITGA2/ITGB1. The polypeptide is Non-structural glycoprotein 4 (Rotavirus A (strain RVA/Cow/United Kingdom/UK/1975/G6P7[5]) (RV-A)).